A 174-amino-acid chain; its full sequence is Cytochrome c-type biogenesis protein CcmE (174 aa).

Residues 1–7 (MTRKSRR) lie on the Cytoplasmic side of the membrane. The helical; Signal-anchor for type II membrane protein transmembrane segment at 8 to 28 (LILIGAGLGVLALAAGLILTA) threads the bilayer. Residues 29–174 (LNDTIVFFRT…PAVSPARSTP (146 aa)) are Periplasmic-facing. Heme-binding residues include His121 and Tyr125. Positions 130–144 (VADALKKSGHWKEGE) are enriched in basic and acidic residues. The interval 130-174 (VADALKKSGHWKEGEEGGPVPPAAKTPGPQSSAAPPAVSPARSTP) is disordered. Over residues 156–174 (PGPQSSAAPPAVSPARSTP) the composition is skewed to low complexity.

Belongs to the CcmE/CycJ family.

The protein localises to the cell inner membrane. Its function is as follows. Heme chaperone required for the biogenesis of c-type cytochromes. Transiently binds heme delivered by CcmC and transfers the heme to apo-cytochromes in a process facilitated by CcmF and CcmH. This is Cytochrome c-type biogenesis protein CcmE from Azorhizobium caulinodans (strain ATCC 43989 / DSM 5975 / JCM 20966 / LMG 6465 / NBRC 14845 / NCIMB 13405 / ORS 571).